A 564-amino-acid chain; its full sequence is uncharacterized protein (564 aa).

Transmembrane regions (helical) follow at residues 12 to 32, 97 to 119, 139 to 161, 188 to 208, 213 to 233, 277 to 297, 306 to 326, and 348 to 368; these read TYYL…LFIL, MTAY…YVLL, AFAL…LALW, FVLG…YDAI, WNLM…FVEY, MTVH…ALLF, NVYL…AFWF, and FHFL…YLIW.

It localises to the cell membrane. This is an uncharacterized protein from Bacillus subtilis (strain 168).